Consider the following 155-residue polypeptide: V-type proton ATPase 16 kDa proteolipid subunit c (155 aa).

The Lumenal segment spans residues 1 to 10 (MADIKNNPEY). The chain crosses the membrane as a helical span at residues 11 to 33 (SSFFGVMGASSAMVFSAMGAAYG). The Cytoplasmic segment spans residues 34–55 (TAKSGTGIAAMSVMRPELIMKS). The helical transmembrane segment at 56–76 (IIPVVMAGIIAIYGLVVAVLI) threads the bilayer. Residues 77 to 92 (ANSLTDGITLYRSFLQ) are Lumenal-facing. The chain crosses the membrane as a helical span at residues 93-114 (LGAGLSVGLSGLAAGFAIGIVG). The Cytoplasmic portion of the chain corresponds to 115-131 (DAGVRGTAQQPRLFVGM). Residues 132-152 (ILILIFAEVLGLYGLIVALIL) form a helical membrane-spanning segment. The Lumenal portion of the chain corresponds to 153–155 (STK).

It belongs to the V-ATPase proteolipid subunit family. In terms of assembly, V-ATPase is a heteromultimeric enzyme made up of two complexes: the ATP-hydrolytic V1 complex and the proton translocation V0 complex. The V1 complex consists of three catalytic AB heterodimers that form a heterohexamer, three peripheral stalks each consisting of EG heterodimers, one central rotor including subunits D and F, and the regulatory subunits C and H. The proton translocation complex V0 consists of the proton transport subunit a, a ring of proteolipid subunits c9c'', rotary subunit d, subunits e and f, and the accessory subunits ATP6AP1/Ac45 and ATP6AP2/PRR. Interacts with the V0 complex V-ATPase subunit a4 ATP6V0A4. Interacts with LASS2. Interacts with RNF182; this interaction leads to ubiquitination and degradation via the proteasome pathway. Post-translationally, ubiquitinated by RNF182, leading to its degradation via the ubiquitin-proteasome pathway.

It is found in the cytoplasmic vesicle. The protein resides in the clathrin-coated vesicle membrane. It localises to the secretory vesicle. The protein localises to the synaptic vesicle membrane. Its function is as follows. Proton-conducting pore forming subunit of the V0 complex of vacuolar(H+)-ATPase (V-ATPase), a multisubunit enzyme composed of a peripheral complex (V1) that hydrolyzes ATP and a membrane integral complex (V0) that translocates protons. V-ATPase is responsible for acidifying and maintaining the pH of intracellular compartments and in some cell types, is targeted to the plasma membrane, where it is responsible for acidifying the extracellular environment. The protein is V-type proton ATPase 16 kDa proteolipid subunit c (Atp6v0c) of Mus musculus (Mouse).